The chain runs to 349 residues: 4-hydroxy-3-methylbut-2-en-1-yl diphosphate synthase (flavodoxin) (349 aa).

[4Fe-4S] cluster contacts are provided by Cys264, Cys267, Cys299, and Glu306.

This sequence belongs to the IspG family. [4Fe-4S] cluster is required as a cofactor.

The enzyme catalyses (2E)-4-hydroxy-3-methylbut-2-enyl diphosphate + oxidized [flavodoxin] + H2O + 2 H(+) = 2-C-methyl-D-erythritol 2,4-cyclic diphosphate + reduced [flavodoxin]. Its pathway is isoprenoid biosynthesis; isopentenyl diphosphate biosynthesis via DXP pathway; isopentenyl diphosphate from 1-deoxy-D-xylulose 5-phosphate: step 5/6. In terms of biological role, converts 2C-methyl-D-erythritol 2,4-cyclodiphosphate (ME-2,4cPP) into 1-hydroxy-2-methyl-2-(E)-butenyl 4-diphosphate. This Clostridium tetani (strain Massachusetts / E88) protein is 4-hydroxy-3-methylbut-2-en-1-yl diphosphate synthase (flavodoxin).